The following is a 448-amino-acid chain: Cysteine--tRNA ligase (448 aa).

Cys-27 is a Zn(2+) binding site. The short motif at 29–39 (PTVYNYIHVGN) is the 'HIGH' region element. Zn(2+)-binding residues include Cys-210, His-235, and Glu-239. The 'KMSKS' region motif lies at 267–271 (KMSKS). An ATP-binding site is contributed by Lys-270.

The protein belongs to the class-I aminoacyl-tRNA synthetase family. In terms of assembly, monomer. Zn(2+) is required as a cofactor.

It is found in the cytoplasm. The enzyme catalyses tRNA(Cys) + L-cysteine + ATP = L-cysteinyl-tRNA(Cys) + AMP + diphosphate. The chain is Cysteine--tRNA ligase from Lactococcus lactis subsp. cremoris (strain MG1363).